The primary structure comprises 457 residues: Phosphoglucosamine mutase (457 aa).

The active-site Phosphoserine intermediate is Ser105. Ser105, Asp247, Asp249, and Asp251 together coordinate Mg(2+). Ser105 carries the phosphoserine modification.

The protein belongs to the phosphohexose mutase family. Mg(2+) is required as a cofactor. Activated by phosphorylation.

The enzyme catalyses alpha-D-glucosamine 1-phosphate = D-glucosamine 6-phosphate. Its function is as follows. Catalyzes the conversion of glucosamine-6-phosphate to glucosamine-1-phosphate. The polypeptide is Phosphoglucosamine mutase (Protochlamydia amoebophila (strain UWE25)).